We begin with the raw amino-acid sequence, 153 residues long: Endoribonuclease YbeY (153 aa).

Zn(2+) contacts are provided by His-114, His-118, and His-124.

Belongs to the endoribonuclease YbeY family. It depends on Zn(2+) as a cofactor.

The protein resides in the cytoplasm. In terms of biological role, single strand-specific metallo-endoribonuclease involved in late-stage 70S ribosome quality control and in maturation of the 3' terminus of the 16S rRNA. The polypeptide is Endoribonuclease YbeY (Shewanella baltica (strain OS223)).